A 282-amino-acid polypeptide reads, in one-letter code: HTH-type transcriptional activator RhaR (282 aa).

One can recognise an HTH araC/xylS-type domain in the interval D179–L277. 2 consecutive DNA-binding regions (H-T-H motif) follow at residues D196–T217 and V244–T267.

As to quaternary structure, binds DNA as a dimer.

It localises to the cytoplasm. In terms of biological role, activates expression of the rhaSR operon in response to L-rhamnose. In Salmonella typhi, this protein is HTH-type transcriptional activator RhaR.